The primary structure comprises 392 residues: Na(+)/H(+) antiporter NhaA 2 (392 aa).

Helical transmembrane passes span F20 to I40, L61 to L81, A99 to F119, I127 to L147, I158 to F178, S181 to L201, L209 to H229, V265 to I285, V298 to I318, G336 to F356, and E365 to L385.

Belongs to the NhaA Na(+)/H(+) (TC 2.A.33) antiporter family.

It is found in the cell inner membrane. It carries out the reaction Na(+)(in) + 2 H(+)(out) = Na(+)(out) + 2 H(+)(in). Its function is as follows. Na(+)/H(+) antiporter that extrudes sodium in exchange for external protons. This chain is Na(+)/H(+) antiporter NhaA 2, found in Pseudomonas syringae pv. syringae (strain B728a).